A 312-amino-acid polypeptide reads, in one-letter code: uncharacterized protein (312 aa).

Residues 95-119 form a disordered region; sequence EKRRENPPKLTLPPLPPPAEERKKP.

It is found in the plastid. The protein localises to the chloroplast. This is an uncharacterized protein from Chlamydomonas moewusii (Chlamydomonas eugametos).